We begin with the raw amino-acid sequence, 105 residues long: Phosphoribosyl-AMP cyclohydrolase (105 aa).

Aspartate 72 is a binding site for Mg(2+). Residue cysteine 73 participates in Zn(2+) binding. Aspartate 74 and aspartate 76 together coordinate Mg(2+). Cysteine 89 and cysteine 96 together coordinate Zn(2+).

It belongs to the PRA-CH family. As to quaternary structure, homodimer. Mg(2+) serves as cofactor. Zn(2+) is required as a cofactor.

The protein resides in the cytoplasm. It catalyses the reaction 1-(5-phospho-beta-D-ribosyl)-5'-AMP + H2O = 1-(5-phospho-beta-D-ribosyl)-5-[(5-phospho-beta-D-ribosylamino)methylideneamino]imidazole-4-carboxamide. It participates in amino-acid biosynthesis; L-histidine biosynthesis; L-histidine from 5-phospho-alpha-D-ribose 1-diphosphate: step 3/9. In terms of biological role, catalyzes the hydrolysis of the adenine ring of phosphoribosyl-AMP. This chain is Phosphoribosyl-AMP cyclohydrolase, found in Listeria monocytogenes serovar 1/2a (strain ATCC BAA-679 / EGD-e).